Reading from the N-terminus, the 362-residue chain is Salactin (362 aa).

A compositionally biased stretch (acidic residues) spans 1–10; that stretch reads MSDDTEDDSG. A disordered region spans residues 1-28; the sequence is MSDDTEDDSGGESTADMEFGEQPAPLGV.

Forms dynamically unstable filaments. Monomers are added at the growing filament end. In vitro, salactin polymerizes in the presence of ATP and AMP-PNP but not in the presence of ADP, GTP, ATPgammaS or buffer alone.

The protein resides in the cytoplasm. Its function is as follows. Actin homolog which might be involved in partitioning DNA between daughter cells when chromosomal copy number is low. This Halobacterium salinarum (strain ATCC 700922 / JCM 11081 / NRC-1) (Halobacterium halobium) protein is Salactin.